A 93-amino-acid polypeptide reads, in one-letter code: Small ribosomal subunit protein bS18c (93 aa).

Belongs to the bacterial ribosomal protein bS18 family. Part of the 30S ribosomal subunit.

The protein localises to the plastid. Its subcellular location is the chloroplast. In Pinus koraiensis (Korean pine), this protein is Small ribosomal subunit protein bS18c.